We begin with the raw amino-acid sequence, 291 residues long: ATP synthase subunit a (291 aa).

The next 5 helical transmembrane spans lie at 47–67 (FTNL…LVFV), 140–160 (HFLI…IVGF), 167–187 (FFSF…LVLL), 207–227 (MMAG…MLFL), and 230–250 (IFYF…TGLE).

It belongs to the ATPase A chain family. As to quaternary structure, F-type ATPases have 2 components, CF(1) - the catalytic core - and CF(0) - the membrane proton channel. CF(1) has five subunits: alpha(3), beta(3), gamma(1), delta(1), epsilon(1). CF(0) has three main subunits: a, b and c.

The protein resides in the mitochondrion inner membrane. Its function is as follows. Mitochondrial membrane ATP synthase (F(1)F(0) ATP synthase or Complex V) produces ATP from ADP in the presence of a proton gradient across the membrane which is generated by electron transport complexes of the respiratory chain. F-type ATPases consist of two structural domains, F(1) - containing the extramembraneous catalytic core and F(0) - containing the membrane proton channel, linked together by a central stalk and a peripheral stalk. During catalysis, ATP synthesis in the catalytic domain of F(1) is coupled via a rotary mechanism of the central stalk subunits to proton translocation. Key component of the proton channel; it may play a direct role in the translocation of protons across the membrane. This is ATP synthase subunit a (ATP6) from Zea mays (Maize).